The following is a 291-amino-acid chain: Shikimate dehydrogenase (NADP(+)) (291 aa).

Shikimate is bound by residues 26-28 (SLS) and serine 73. Lysine 77 functions as the Proton acceptor in the catalytic mechanism. Asparagine 98 and aspartate 113 together coordinate shikimate. NADP(+) contacts are provided by residues 137–141 (GAGGA) and valine 238. Tyrosine 240 is a binding site for shikimate. Glycine 261 provides a ligand contact to NADP(+).

The protein belongs to the shikimate dehydrogenase family. Homodimer.

It carries out the reaction shikimate + NADP(+) = 3-dehydroshikimate + NADPH + H(+). It functions in the pathway metabolic intermediate biosynthesis; chorismate biosynthesis; chorismate from D-erythrose 4-phosphate and phosphoenolpyruvate: step 4/7. Involved in the biosynthesis of the chorismate, which leads to the biosynthesis of aromatic amino acids. Catalyzes the reversible NADPH linked reduction of 3-dehydroshikimate (DHSA) to yield shikimate (SA). In Listeria innocua serovar 6a (strain ATCC BAA-680 / CLIP 11262), this protein is Shikimate dehydrogenase (NADP(+)).